We begin with the raw amino-acid sequence, 182 residues long: Large ribosomal subunit protein bL25 (182 aa).

This sequence belongs to the bacterial ribosomal protein bL25 family. CTC subfamily. In terms of assembly, part of the 50S ribosomal subunit; part of the 5S rRNA/L5/L18/L25 subcomplex. Contacts the 5S rRNA. Binds to the 5S rRNA independently of L5 and L18.

Its function is as follows. This is one of the proteins that binds to the 5S RNA in the ribosome where it forms part of the central protuberance. This Borrelia turicatae (strain 91E135) protein is Large ribosomal subunit protein bL25.